The sequence spans 457 residues: Cysteine--tRNA ligase (457 aa).

Cys-27 contributes to the Zn(2+) binding site. Positions 29-39 match the 'HIGH' region motif; that stretch reads PTVYDFAHIGN. Zn(2+) is bound by residues Cys-211, His-236, and Glu-240. The short motif at 269–273 is the 'KMSKS' region element; it reads KMSKS. Lys-272 lines the ATP pocket.

Belongs to the class-I aminoacyl-tRNA synthetase family. Monomer. Zn(2+) serves as cofactor.

The protein resides in the cytoplasm. It catalyses the reaction tRNA(Cys) + L-cysteine + ATP = L-cysteinyl-tRNA(Cys) + AMP + diphosphate. This is Cysteine--tRNA ligase from Ehrlichia ruminantium (strain Welgevonden).